The sequence spans 512 residues: Probable multidrug resistance protein EmrY (512 aa).

At 1–8 (MAITKSTP) the chain is on the cytoplasmic side. A helical transmembrane segment spans residues 9–29 (APLTGGTLWCVTIALSLATFM). A topological domain (periplasmic) is located at residue Gln30. Residues 31-51 (MLDSTISNVAIPTISGFLGAS) traverse the membrane as a helical segment. Residues 52–53 (TD) lie on the Cytoplasmic side of the membrane. A helical transmembrane segment spans residues 54-74 (EGTWVITSFGVANAIAIPVTG). Residues 75 to 84 (RLAQRIGELR) are Periplasmic-facing. The next 2 helical transmembrane spans lie at 85–105 (LFLL…LSTN) and 106–126 (LDVL…LIPL). At 127–141 (SQSLLLRNYPPEKRT) the chain is on the periplasmic side. Residues 142-162 (FALALWSMTVIIAPICGPILG) traverse the membrane as a helical segment. At 163–172 (GYICDNFSWG) the chain is on the cytoplasmic side. The helical transmembrane segment at 173–193 (WIFLINVPMGIIVLTLCLTLL) threads the bilayer. Residues 194 to 204 (KGRETETSPVK) are Periplasmic-facing. A helical transmembrane segment spans residues 205 to 225 (MNLPGLTLLVLGVGGLQIMLD). The Cytoplasmic segment spans residues 226–234 (KGRDLDWFN). A helical transmembrane segment spans residues 235–255 (SSTIIILTVVSVISLISLVIW). Over 256 to 273 (ESTSENPILDLSLFKSRN) the chain is Periplasmic. The helical transmembrane segment at 274–294 (FTIGIVSITCAYLFYSGAIVL) threads the bilayer. Topologically, residues 295-307 (MPQLLQETMGYNA) are cytoplasmic. The chain crosses the membrane as a helical span at residues 308–328 (IWAGLAYAPIGIMPLLISPLI). The Periplasmic portion of the chain corresponds to 329–338 (GRYGNKIDMR). Residues 339–359 (LLVTFSFLMYAVCYYWRSVTF) form a helical membrane-spanning segment. The Cytoplasmic portion of the chain corresponds to 360–364 (MPTID). A helical membrane pass occupies residues 365 to 385 (FTGIILPQFFQGFAVACFFLP). Residues 386 to 486 (LTTISFSGLP…LSISANEIFR (101 aa)) lie on the Periplasmic side of the membrane. A helical transmembrane segment spans residues 487–507 (MAAIAFILLTVLVWFAKPPFT). At 508–512 (AKGVG) the chain is on the cytoplasmic side.

The protein belongs to the major facilitator superfamily. EmrB family. As to quaternary structure, part of the tripartite efflux system EmrYK-TolC, which is composed of an inner membrane transporter, EmrY, a membrane fusion protein, EmrK, and an outer membrane component, TolC. The complex forms a large protein conduit and can translocate molecules across both the inner and outer membranes.

The protein resides in the cell inner membrane. Part of the tripartite efflux system EmrYK-TolC, which confers resistance to various drugs. The chain is Probable multidrug resistance protein EmrY (emrY) from Escherichia coli (strain K12).